The primary structure comprises 178 residues: Large ribosomal subunit protein bL25 (178 aa).

It belongs to the bacterial ribosomal protein bL25 family. CTC subfamily. In terms of assembly, part of the 50S ribosomal subunit; part of the 5S rRNA/L5/L18/L25 subcomplex. Contacts the 5S rRNA. Binds to the 5S rRNA independently of L5 and L18.

In terms of biological role, this is one of the proteins that binds to the 5S RNA in the ribosome where it forms part of the central protuberance. The polypeptide is Large ribosomal subunit protein bL25 (Nitratiruptor sp. (strain SB155-2)).